The following is a 122-amino-acid chain: Small ribosomal subunit protein uS13 (122 aa).

The interval 93-122 (RLSLPVRGQRTKTNSRTRKGKRKTVAGKKK) is disordered. Residues 101 to 122 (QRTKTNSRTRKGKRKTVAGKKK) are compositionally biased toward basic residues.

It belongs to the universal ribosomal protein uS13 family. As to quaternary structure, part of the 30S ribosomal subunit. Forms a loose heterodimer with protein S19. Forms two bridges to the 50S subunit in the 70S ribosome.

Its function is as follows. Located at the top of the head of the 30S subunit, it contacts several helices of the 16S rRNA. In the 70S ribosome it contacts the 23S rRNA (bridge B1a) and protein L5 of the 50S subunit (bridge B1b), connecting the 2 subunits; these bridges are implicated in subunit movement. Contacts the tRNAs in the A and P-sites. The protein is Small ribosomal subunit protein uS13 of Chlamydia pneumoniae (Chlamydophila pneumoniae).